Reading from the N-terminus, the 311-residue chain is Putative S-adenosyl-L-methionine-dependent methyltransferase MSMEG_0095/MSMEI_0092 (311 aa).

S-adenosyl-L-methionine is bound by residues D134 and D163 to L164.

It belongs to the UPF0677 family.

Exhibits S-adenosyl-L-methionine-dependent methyltransferase activity. The polypeptide is Putative S-adenosyl-L-methionine-dependent methyltransferase MSMEG_0095/MSMEI_0092 (Mycolicibacterium smegmatis (strain ATCC 700084 / mc(2)155) (Mycobacterium smegmatis)).